Here is a 274-residue protein sequence, read N- to C-terminus: Type II restriction enzyme HgiBI (274 aa).

This sequence belongs to the TdeIII type II restriction endonuclease family.

The catalysed reaction is Endonucleolytic cleavage of DNA to give specific double-stranded fragments with terminal 5'-phosphates.. A P subtype restriction enzyme that recognizes the double-stranded sequence 5'-GGWCC-3' and cleaves after G-1. This system is less active than isoschizomeric RM.HgiEI. The protein is Type II restriction enzyme HgiBI of Herpetosiphon aurantiacus (Herpetosiphon giganteus).